Here is a 351-residue protein sequence, read N- to C-terminus: Glycerol-3-phosphate dehydrogenase [NAD(P)+] (351 aa).

Residues Ser-18, Trp-19, Arg-38, and Lys-122 each contribute to the NADPH site. The sn-glycerol 3-phosphate site is built by Lys-122, Gly-153, and Ser-155. Ala-157 serves as a coordination point for NADPH. 5 residues coordinate sn-glycerol 3-phosphate: Lys-208, Asp-261, Ser-271, Arg-272, and Asn-273. The active-site Proton acceptor is the Lys-208. An NADPH-binding site is contributed by Arg-272. Glu-297 is an NADPH binding site.

Belongs to the NAD-dependent glycerol-3-phosphate dehydrogenase family.

The protein resides in the cytoplasm. It catalyses the reaction sn-glycerol 3-phosphate + NAD(+) = dihydroxyacetone phosphate + NADH + H(+). The enzyme catalyses sn-glycerol 3-phosphate + NADP(+) = dihydroxyacetone phosphate + NADPH + H(+). It functions in the pathway membrane lipid metabolism; glycerophospholipid metabolism. Catalyzes the reduction of the glycolytic intermediate dihydroxyacetone phosphate (DHAP) to sn-glycerol 3-phosphate (G3P), the key precursor for phospholipid synthesis. The polypeptide is Glycerol-3-phosphate dehydrogenase [NAD(P)+] (Bordetella parapertussis (strain 12822 / ATCC BAA-587 / NCTC 13253)).